The primary structure comprises 106 residues: Putative toxin Rv3098A/RVBD_3098A (106 aa).

The protein belongs to the PemK/MazF family. As to quaternary structure, forms a complex with cognate antitoxin Rv3098B/RVBD_3098B.

Functionally, putative toxic component of a possible type II toxin-antitoxin (TA) system. Its toxic effect may be neutralized by cognate antitoxin Rv3098B/RVBD_3098B. The polypeptide is Putative toxin Rv3098A/RVBD_3098A (Mycobacterium tuberculosis (strain ATCC 25618 / H37Rv)).